We begin with the raw amino-acid sequence, 390 residues long: Na(+)/H(+) antiporter NhaA (390 aa).

12 helical membrane passes run 14–34 (AAGG…ANLN), 61–81 (MLLW…GLEV), 97–117 (SLPV…YLAF), 126–146 (AGWA…LALL), 156–176 (VFLM…IALF), 181–201 (LSMV…VLNL), 221–241 (VLKS…FVPL), 256–276 (ALHP…NAGV), 280–300 (GVTL…GLFI), 305–325 (GISL…PPGV), 330–350 (ILAV…IASL), and 362–382 (WAKL…YALL).

It belongs to the NhaA Na(+)/H(+) (TC 2.A.33) antiporter family.

The protein localises to the cell inner membrane. The enzyme catalyses Na(+)(in) + 2 H(+)(out) = Na(+)(out) + 2 H(+)(in). Na(+)/H(+) antiporter that extrudes sodium in exchange for external protons. In Cronobacter sakazakii (strain ATCC BAA-894) (Enterobacter sakazakii), this protein is Na(+)/H(+) antiporter NhaA.